The sequence spans 330 residues: Beta-ketoacyl-[acyl-carrier-protein] synthase III (330 aa).

Active-site residues include Cys114 and His254. Residues 255–259 form an ACP-binding region; sequence QANLR. Residue Asn284 is part of the active site.

This sequence belongs to the thiolase-like superfamily. FabH family. Homodimer.

The protein resides in the cytoplasm. The enzyme catalyses malonyl-[ACP] + acetyl-CoA + H(+) = 3-oxobutanoyl-[ACP] + CO2 + CoA. It functions in the pathway lipid metabolism; fatty acid biosynthesis. In terms of biological role, catalyzes the condensation reaction of fatty acid synthesis by the addition to an acyl acceptor of two carbons from malonyl-ACP. Catalyzes the first condensation reaction which initiates fatty acid synthesis and may therefore play a role in governing the total rate of fatty acid production. Possesses both acetoacetyl-ACP synthase and acetyl transacylase activities. Its substrate specificity determines the biosynthesis of branched-chain and/or straight-chain of fatty acids. This is Beta-ketoacyl-[acyl-carrier-protein] synthase III from Roseiflexus castenholzii (strain DSM 13941 / HLO8).